Reading from the N-terminus, the 120-residue chain is UPF0231 protein YacL (120 aa).

It belongs to the UPF0231 family.

The chain is UPF0231 protein YacL from Escherichia coli O81 (strain ED1a).